A 151-amino-acid polypeptide reads, in one-letter code: Small ribosomal subunit protein uS15 (151 aa).

The protein belongs to the universal ribosomal protein uS15 family.

The sequence is that of Small ribosomal subunit protein uS15 (RpS13) from Spodoptera frugiperda (Fall armyworm).